An 869-amino-acid chain; its full sequence is Serendipity locus protein H-1 (869 aa).

The segment covering 1–17 (MEGGKGEGKRMKEEAPS) has biased composition (basic and acidic residues). 2 disordered regions span residues 1–32 (MEGG…AGTP) and 134–165 (FSVT…TPVK). Residues 146–164 (AFTNSPFKKTSSSGTSTPV) show a composition bias toward polar residues. 8 consecutive C2H2-type zinc fingers follow at residues 269 to 293 (HKCL…AAAH), 299 to 321 (YRCS…LKTH), 331 to 352 (KKCP…RKIH), 358 to 380 (YQCD…ARIH), 386 to 408 (YECP…QKYH), 414 to 436 (YRCE…NLVH), 442 to 464 (FACT…SNIH), and 470 to 493 (FKCN…RRRH). Disordered stretches follow at residues 554-573 (TSTA…QPQQ) and 617-652 (PKQT…SSLE). The segment covering 630–648 (APKQLQQKPQLLQQGQPQQ) has biased composition (low complexity).

Distribution varies between nurse cells and the oocyte during oogenesis. Weakly expressed in follicle and border cells.

Its subcellular location is the nucleus. May belong to a complex set of multifingered proteins which play an important role in gene activation or regulation at early embryonic stages through a maximal accumulation of their transcripts (or protein product) in the mature oocyte. This is Serendipity locus protein H-1 (wdn) from Drosophila melanogaster (Fruit fly).